Reading from the N-terminus, the 300-residue chain is Fe(3+) dicitrate-binding periplasmic protein FecB (300 aa).

The first 21 residues, 1–21, serve as a signal peptide directing secretion; that stretch reads MLAFIRFLFAGLLLVISHAFA. Residues 39–295 form the Fe/B12 periplasmic-binding domain; it reads RIVVLELSFA…DTVKIFHHQP (257 aa).

The protein belongs to the bacterial solute-binding protein 8 family. As to quaternary structure, the complex is composed of two ATP-binding proteins (FecE), two transmembrane proteins (FecC and FecD) and a solute-binding protein (FecB). Interacts with FecC and FecD.

Its subcellular location is the periplasm. In terms of biological role, part of the ABC transporter complex FecBCDE involved in citrate-dependent Fe(3+) uptake. Binds both iron-free and iron-loaded citrate although it binds iron-loaded citrate with a higher affinity. Binds different forms of Fe(3+)-citrate as well as citrate complexed with various representative Fe(3+)-mimics (Ga(3+), Al(3+), Sc(3+) and In(3+)) and a representative divalent metal ion (Mg(2+)). Can also bind various tricarboxylates in iron-free and iron-loaded form. In Escherichia coli (strain K12), this protein is Fe(3+) dicitrate-binding periplasmic protein FecB.